Here is a 364-residue protein sequence, read N- to C-terminus: 3-isopropylmalate dehydrogenase (364 aa).

79–92 (GPKWEHLPAAEQPE) is an NAD(+) binding site. Substrate-binding residues include R100, R110, R139, and D228. Positions 228, 252, and 256 each coordinate Mg(2+). 286–298 (GSAPDIAGKDIAN) contacts NAD(+).

Belongs to the isocitrate and isopropylmalate dehydrogenases family. LeuB type 1 subfamily. Homodimer. It depends on Mg(2+) as a cofactor. The cofactor is Mn(2+).

It is found in the cytoplasm. It catalyses the reaction (2R,3S)-3-isopropylmalate + NAD(+) = 4-methyl-2-oxopentanoate + CO2 + NADH. Its pathway is amino-acid biosynthesis; L-leucine biosynthesis; L-leucine from 3-methyl-2-oxobutanoate: step 3/4. Functionally, catalyzes the oxidation of 3-carboxy-2-hydroxy-4-methylpentanoate (3-isopropylmalate) to 3-carboxy-4-methyl-2-oxopentanoate. The product decarboxylates to 4-methyl-2 oxopentanoate. This Sodalis glossinidius (strain morsitans) protein is 3-isopropylmalate dehydrogenase.